The following is a 377-amino-acid chain: Mitogen-activated protein kinase pmk-1 (377 aa).

The region spanning 35-319 (YINLTPIGTG…AKEAMEHEYL (285 aa)) is the Protein kinase domain. Residues 41-49 (IGTGAYGTV) and Lys64 contribute to the ATP site. The active-site Proton acceptor is the Asp179. Position 191 is a phosphothreonine (Thr191). A TXY motif is present at residues 191–193 (TGY). A Phosphotyrosine modification is found at Tyr193.

The protein belongs to the protein kinase superfamily. CMGC Ser/Thr protein kinase family. MAP kinase subfamily. In terms of assembly, interacts with transcription factor atf-7; perhaps in a manner dependent on dual specificity protein kinase sek-1. Requires Mg(2+) as cofactor. Mn(2+) is required as a cofactor. Dually phosphorylated on Thr-191 and Tyr-193, probably by sek-1, which activates the enzyme. Increased phosphorylation in response to the heavy metal arsenite. Increased phosphorylation in response to intestinal colonization by probiotic Lactobacillus fermentum strain JDFM216. As to expression, expressed in intestinal cells.

It localises to the nucleus. The enzyme catalyses L-seryl-[protein] + ATP = O-phospho-L-seryl-[protein] + ADP + H(+). It carries out the reaction L-threonyl-[protein] + ATP = O-phospho-L-threonyl-[protein] + ADP + H(+). Activated by phosphorylation on threonine and tyrosine. Inhibited by pyridinyl-imidazole related compounds. In terms of biological role, serine/threonine kinase which responds to activation by environmental stress and pro-inflammatory cytokines by phosphorylating downstream targets. As part of a MAP kinase signaling pathway, plays a role in modulation of lifespan and immunity. Phosphorylates skn-1 which probably regulates skn-1 nuclear translocation in response to oxidative stress. Probably by activating skn-1, involved in the up-regulation of gcs-1 and glutathione-S-transferase gst-4 expression upon bacteria infection. Up-regulates expression of gcs-1 in intestinal cells upon arsenite treatment. Functions downstream of the MAPKK sek-1 and the MAPKKK nsy-1 as the MAP kinase which regulates pathogen resistance and responses to oxidative stress. Required for expression of antimicrobial peptide nlp-29 in response to fungal infection or physical injury. Involved in resistance to the nematotoxic C.cinerea galectin (Cgl2). May play a redundant role with other MAP kinases in susceptibility to anoxia, downstream of tir-1/nsy-1. Phosphorylates transcription factor rnt-1 during oxidative stress which results in rnt-1 stabilization in the intestine. Phosphorylates transcription factor atf-7 during pathogen infection resulting in modulation of target genes. Probably downstream of nsy-1 and sek-1, involved in germline apoptosis induced by heavy metals, such as Cu(2+). Regulates the basal expression of immune effector genes including irg-4, irg-5, mul-1 and drd-50. The chain is Mitogen-activated protein kinase pmk-1 from Caenorhabditis elegans.